A 507-amino-acid polypeptide reads, in one-letter code: Photosystem II CP47 reaction center protein (507 aa).

The Cytoplasmic portion of the chain corresponds to 2 to 16; sequence GLPWYRVHTVVLNDP. The chain crosses the membrane as a helical span at residues 17-39; it reads GRLISVHLMHTALVAGWAGSMAL. Residues 40-94 are Lumenal, thylakoid-facing; it reads YELAIFDSSDAVLNPMWRQGMFVLPFMARLGVTSSWNGWSVTGETGLDPGFWSFE. The helical transmembrane segment at 95-116 threads the bilayer; the sequence is GVAAAHIVLSGLLFLAAVWHWV. Over 117–134 the chain is Cytoplasmic; the sequence is FWDLELFVDPRTGESALD. Residues 135-159 form a helical membrane-spanning segment; that stretch reads LPKMFGIHLFLSGLLCFGFGAFHLT. The Lumenal, thylakoid segment spans residues 160 to 196; sequence GVWGPGMWVSDPYGLTGHVQPVAPEWGPAGFNPFNPG. Residues 197-218 form a helical membrane-spanning segment; it reads GVVAHHIAAGIVGIIAGLFHLT. Residues 219 to 233 lie on the Cytoplasmic side of the membrane; the sequence is VRPPERLYKALRMGN. The chain crosses the membrane as a helical span at residues 234–255; sequence IETVLSSSIAAVFFAAFVVAGT. The Lumenal, thylakoid portion of the chain corresponds to 256–450; that stretch reads MWYGNATTPI…GVFRTSPRGW (195 aa). The chain crosses the membrane as a helical span at residues 451 to 474; that stretch reads FTFGHAVFALLFFFGHIWHGSRTL. The Cytoplasmic portion of the chain corresponds to 475-507; the sequence is FRDVFAGVDPGLEEQVEFGVFAKVGDLSTRKEA.

Belongs to the PsbB/PsbC family. PsbB subfamily. In terms of assembly, PSII is composed of 1 copy each of membrane proteins PsbA, PsbB, PsbC, PsbD, PsbE, PsbF, PsbH, PsbI, PsbJ, PsbK, PsbL, PsbM, PsbT, PsbX, Psb30/Ycf12, peripheral proteins PsbO, CyanoQ (PsbQ), PsbU, PsbV and a large number of cofactors. It forms dimeric complexes. Contacts PsbQ. The cofactor is Binds multiple chlorophylls. PSII binds additional chlorophylls, carotenoids and specific lipids..

The protein resides in the cellular thylakoid membrane. One of the components of the core complex of photosystem II (PSII). It binds chlorophyll and helps catalyze the primary light-induced photochemical processes of PSII. PSII is a light-driven water:plastoquinone oxidoreductase, using light energy to abstract electrons from H(2)O, generating O(2) and a proton gradient subsequently used for ATP formation. The polypeptide is Photosystem II CP47 reaction center protein (Synechocystis sp. (strain ATCC 27184 / PCC 6803 / Kazusa)).